The primary structure comprises 304 residues: Oxygen-dependent coproporphyrinogen-III oxidase (304 aa).

A substrate-binding site is contributed by S94. 2 residues coordinate a divalent metal cation: H98 and H108. The active-site Proton donor is the H108. 110–112 (NVR) contacts substrate. Positions 147 and 177 each coordinate a divalent metal cation. The important for dimerization stretch occupies residues 242–277 (YVEFNLVYDRGTLFGLQTGGRTESILMSMPPLVRWE). Residue 260 to 262 (GGR) coordinates substrate.

Belongs to the aerobic coproporphyrinogen-III oxidase family. Homodimer. A divalent metal cation is required as a cofactor.

Its subcellular location is the cytoplasm. The catalysed reaction is coproporphyrinogen III + O2 + 2 H(+) = protoporphyrinogen IX + 2 CO2 + 2 H2O. It functions in the pathway porphyrin-containing compound metabolism; protoporphyrin-IX biosynthesis; protoporphyrinogen-IX from coproporphyrinogen-III (O2 route): step 1/1. Its function is as follows. Involved in the heme biosynthesis. Catalyzes the aerobic oxidative decarboxylation of propionate groups of rings A and B of coproporphyrinogen-III to yield the vinyl groups in protoporphyrinogen-IX. The sequence is that of Oxygen-dependent coproporphyrinogen-III oxidase from Shewanella piezotolerans (strain WP3 / JCM 13877).